The sequence spans 157 residues: Protein Smg homolog (157 aa).

Belongs to the Smg family.

This is Protein Smg homolog from Photobacterium profundum (strain SS9).